The sequence spans 270 residues: MDERPVLFFDSGIGGLTVLREVRSLIPEKQFIYVADDVGFPYGNWEENVLKNRILKIFTNLLTVYNPALCVIACNTVSTLMIADLRERFPHILFVGTVPAIKLAAEQTKSGFISVLATPGTVKRTYTHELINSFAGQCHVQLVGSEKLAGFAENYLRGQSVDLEELRNEILPCFVKKNGKHTDIIVLACTHYPFLLHFFREQALWHVQWIDPSKAIAKRTRSLLPQRIHHQTVKKYEDFALFTSQNITSSTKRLLKEFSLNITKGVDFKV.

Residues 10-11 (DS) and 42-43 (YG) each bind substrate. Cysteine 74 serves as the catalytic Proton donor/acceptor. 75-76 (NT) provides a ligand contact to substrate. Cysteine 189 acts as the Proton donor/acceptor in catalysis. A substrate-binding site is contributed by 190–191 (TH).

The protein belongs to the aspartate/glutamate racemases family.

The enzyme catalyses L-glutamate = D-glutamate. Its pathway is cell wall biogenesis; peptidoglycan biosynthesis. Functionally, provides the (R)-glutamate required for cell wall biosynthesis. The sequence is that of Glutamate racemase from Bartonella henselae (strain ATCC 49882 / DSM 28221 / CCUG 30454 / Houston 1) (Rochalimaea henselae).